Consider the following 188-residue polypeptide: Cytidylate kinase (188 aa).

7–15 (GKIGSGKST) is an ATP binding site.

The protein belongs to the cytidylate kinase family. Type 2 subfamily.

Its subcellular location is the cytoplasm. The catalysed reaction is CMP + ATP = CDP + ADP. It catalyses the reaction dCMP + ATP = dCDP + ADP. The sequence is that of Cytidylate kinase (cmk) from Thermoplasma acidophilum (strain ATCC 25905 / DSM 1728 / JCM 9062 / NBRC 15155 / AMRC-C165).